Here is a 629-residue protein sequence, read N- to C-terminus: uncharacterized protein (629 aa).

Disordered stretches follow at residues 101-126, 172-209, 315-339, and 448-468; these read SWKK…TPPT, PQKD…EEED, STPK…NSQR, and GENT…SEEP. Positions 200-209 are enriched in acidic residues; sequence TEEEEEEEED. At serine 334 the chain carries Phosphoserine. Residues 448–463 are compositionally biased toward polar residues; it reads GENTANNGYGPQTLNE.

This is an uncharacterized protein from Schizosaccharomyces pombe (strain 972 / ATCC 24843) (Fission yeast).